The following is a 318-amino-acid chain: uncharacterized protein (318 aa).

This sequence to E.coli YfaT and P.aeruginosa PA4490.

This is an uncharacterized protein from Thermotoga maritima (strain ATCC 43589 / DSM 3109 / JCM 10099 / NBRC 100826 / MSB8).